A 167-amino-acid polypeptide reads, in one-letter code: Claudin domain-containing protein 2 (167 aa).

Transmembrane regions (helical) follow at residues 7 to 27 (LQSGGILLSLVANVLMVLSTA), 59 to 79 (LAVTVACMVLAVGVGVVGMVM), 96 to 116 (TSAFLFLGGLLLLTALIGYTV), and 134 to 154 (WLALPFSILAGFCFLLADMIM).

The protein belongs to the PMP-22/EMP/MP20 family.

Its subcellular location is the membrane. The sequence is that of Claudin domain-containing protein 2 (CLDND2) from Homo sapiens (Human).